The following is a 228-amino-acid chain: tRNA (guanine-N(1)-)-methyltransferase (228 aa).

Residues Gly111 and 130-135 (IGDFVL) each bind S-adenosyl-L-methionine.

It belongs to the RNA methyltransferase TrmD family. In terms of assembly, homodimer.

It localises to the cytoplasm. The enzyme catalyses guanosine(37) in tRNA + S-adenosyl-L-methionine = N(1)-methylguanosine(37) in tRNA + S-adenosyl-L-homocysteine + H(+). In terms of biological role, specifically methylates guanosine-37 in various tRNAs. This is tRNA (guanine-N(1)-)-methyltransferase from Ureaplasma urealyticum serovar 10 (strain ATCC 33699 / Western).